Here is a 301-residue protein sequence, read N- to C-terminus: ATP synthase gamma chain (301 aa).

Belongs to the ATPase gamma chain family. In terms of assembly, F-type ATPases have 2 components, CF(1) - the catalytic core - and CF(0) - the membrane proton channel. CF(1) has five subunits: alpha(3), beta(3), gamma(1), delta(1), epsilon(1). CF(0) has three main subunits: a, b and c.

The protein resides in the cell inner membrane. Functionally, produces ATP from ADP in the presence of a proton gradient across the membrane. The gamma chain is believed to be important in regulating ATPase activity and the flow of protons through the CF(0) complex. The polypeptide is ATP synthase gamma chain (Bordetella parapertussis (strain 12822 / ATCC BAA-587 / NCTC 13253)).